A 209-amino-acid chain; its full sequence is D-aminoacyl-tRNA deacylase 1 (209 aa).

The Gly-cisPro motif, important for rejection of L-amino acids motif lies at 139-140 (GP). The tract at residues 142 to 209 (TIELESPAPG…EGDVSSEREP (68 aa)) is disordered. 2 stretches are compositionally biased toward basic and acidic residues: residues 159–170 (QLSKLEKQQQRK) and 181–194 (SSKE…EDRS). Phosphoserine is present on residues S197, S204, and S205.

It belongs to the DTD family. In terms of assembly, homodimer. Interacts with CDC45 and TOPBP1. Preferentially phosphorylated in cells arrested early in S phase. Phosphorylation in the C-terminus weakens the interaction with CDC45.

The protein localises to the nucleus. It localises to the cytoplasm. The enzyme catalyses glycyl-tRNA(Ala) + H2O = tRNA(Ala) + glycine + H(+). It carries out the reaction a D-aminoacyl-tRNA + H2O = a tRNA + a D-alpha-amino acid + H(+). Its function is as follows. An aminoacyl-tRNA editing enzyme that deacylates mischarged D-aminoacyl-tRNAs. Also deacylates mischarged glycyl-tRNA(Ala), protecting cells against glycine mischarging by AlaRS. Acts via tRNA-based rather than protein-based catalysis; rejects L-amino acids rather than detecting D-amino acids in the active site. By recycling D-aminoacyl-tRNA to D-amino acids and free tRNA molecules, this enzyme counteracts the toxicity associated with the formation of D-aminoacyl-tRNA entities in vivo and helps enforce protein L-homochirality. In terms of biological role, ATPase involved in DNA replication, may facilitate loading of CDC45 onto pre-replication complexes. In Mus musculus (Mouse), this protein is D-aminoacyl-tRNA deacylase 1 (Dtd1).